Reading from the N-terminus, the 72-residue chain is Subtilisin-chymotrypsin inhibitor-2B (72 aa).

It belongs to the protease inhibitor I13 (potato type I serine protease inhibitor) family.

In terms of biological role, inhibits both subtilisin and chymotrypsin. The sequence is that of Subtilisin-chymotrypsin inhibitor-2B from Hordeum vulgare (Barley).